The following is a 784-amino-acid chain: ent-copalyl diphosphate synthase 2, chloroplastic (784 aa).

Residues 1–57 (MSMTLFASVTRPGLPGPTALRFPETRHLFHSVTAFAASFSPSKSSVGSSQCNATTPP) constitute a chloroplast transit peptide. Lys242 is a substrate binding site. Residues Asp379 and Asp381 each contribute to the Mg(2+) site. A DXDD motif motif is present at residues 379 to 382 (DIDD). Lys466 serves as a coordination point for substrate.

Belongs to the terpene synthase family. Requires Mg(2+) as cofactor. In terms of tissue distribution, present in both leaves and flowers.

The protein localises to the plastid. The protein resides in the chloroplast. It functions in the pathway plant hormone biosynthesis; gibberellin biosynthesis. The protein operates within secondary metabolite biosynthesis; terpenoid biosynthesis. In terms of biological role, involved in the biosynthesis of labdane-type diterpenoid including marrubiin and other labdane-related furanoid diterpenoids with potential applications as anti-diabetics, analgesics or vasorelaxants. May be involved in the conversion of geranylgeranyl diphosphate (GGPP) to ent-copalyl diphosphate (ent-CPP) and 8-hydroxycopalyl diphosphate (LPP, labda-13-en-8-ol diphosphate). The polypeptide is ent-copalyl diphosphate synthase 2, chloroplastic (Marrubium vulgare (White horehound)).